Here is a 673-residue protein sequence, read N- to C-terminus: L-type lectin-domain containing receptor kinase SIT2 (673 aa).

Positions 1-27 (MVLPKPEMPFFVLLLFLGLGCLRPAAA) are cleaved as a signal peptide. Over 28-296 (TDERFVFNGF…FPKPRSKTLE (269 aa)) the chain is Extracellular. The interval 32-270 (FVFNGFTGAN…VLGWSFKMNG (239 aa)) is legume-lectin like. N-linked (GlcNAc...) asparagine glycosylation is found at N41, N60, N82, N118, N138, N191, N214, N235, and N276. Residues 297 to 317 (IVLPIASAVLVFAVAAAVFVF) traverse the membrane as a helical segment. At 318 to 673 (MRRRRMFSEL…GTFSDLSGGR (356 aa)) the chain is on the cytoplasmic side. The Protein kinase domain occupies 352–631 (FSDKRLLGIG…LEGDVPLPEL (280 aa)). ATP is bound by residues 358–366 (LGIGGFGRV) and K381. D477 (proton acceptor) is an active-site residue.

It in the C-terminal section; belongs to the protein kinase superfamily. Ser/Thr protein kinase family. The protein in the N-terminal section; belongs to the leguminous lectin family. Mainly expressed in root epidermal cells.

The protein localises to the cell membrane. It carries out the reaction L-seryl-[protein] + ATP = O-phospho-L-seryl-[protein] + ADP + H(+). The enzyme catalyses L-threonyl-[protein] + ATP = O-phospho-L-threonyl-[protein] + ADP + H(+). Lectin-domain containing receptor kinase involved in salt stress response. Acts as a negative regulator of salt tolerance. In Oryza sativa subsp. japonica (Rice), this protein is L-type lectin-domain containing receptor kinase SIT2.